Consider the following 549-residue polypeptide: Glucose-6-phosphate isomerase (549 aa).

K80, K228, and K234 each carry N6-acetyllysine. The active-site Proton donor is the E355. Catalysis depends on residues H386 and K514.

Belongs to the GPI family.

Its subcellular location is the cytoplasm. The enzyme catalyses alpha-D-glucose 6-phosphate = beta-D-fructose 6-phosphate. It functions in the pathway carbohydrate biosynthesis; gluconeogenesis. It participates in carbohydrate degradation; glycolysis; D-glyceraldehyde 3-phosphate and glycerone phosphate from D-glucose: step 2/4. In terms of biological role, catalyzes the reversible isomerization of glucose-6-phosphate to fructose-6-phosphate. In Shigella flexneri, this protein is Glucose-6-phosphate isomerase.